Reading from the N-terminus, the 235-residue chain is UPF0758 protein CD630_11440 (235 aa).

Positions lysine 113–isoleucine 235 constitute an MPN domain. The Zn(2+) site is built by histidine 184, histidine 186, and aspartate 197. A JAMM motif motif is present at residues histidine 184–aspartate 197.

The protein belongs to the UPF0758 family.

This chain is UPF0758 protein CD630_11440, found in Clostridioides difficile (strain 630) (Peptoclostridium difficile).